The sequence spans 108 residues: UPF0145 protein LGAS_1099 (108 aa).

It belongs to the UPF0145 family.

The protein is UPF0145 protein LGAS_1099 of Lactobacillus gasseri (strain ATCC 33323 / DSM 20243 / BCRC 14619 / CIP 102991 / JCM 1131 / KCTC 3163 / NCIMB 11718 / NCTC 13722 / AM63).